We begin with the raw amino-acid sequence, 309 residues long: Porphobilinogen deaminase (309 aa).

S-(dipyrrolylmethanemethyl)cysteine is present on Cys242.

This sequence belongs to the HMBS family. Monomer. Requires dipyrromethane as cofactor.

The enzyme catalyses 4 porphobilinogen + H2O = hydroxymethylbilane + 4 NH4(+). It functions in the pathway porphyrin-containing compound metabolism; protoporphyrin-IX biosynthesis; coproporphyrinogen-III from 5-aminolevulinate: step 2/4. Its function is as follows. Tetrapolymerization of the monopyrrole PBG into the hydroxymethylbilane pre-uroporphyrinogen in several discrete steps. In Hamiltonella defensa subsp. Acyrthosiphon pisum (strain 5AT), this protein is Porphobilinogen deaminase.